Consider the following 513-residue polypeptide: Xylose import ATP-binding protein XylG (513 aa).

ABC transporter domains lie at 5-242 (LEMK…VGRE) and 259-505 (LRIE…LRSE). 37 to 44 (GENGSGKS) provides a ligand contact to ATP.

Belongs to the ABC transporter superfamily. Xylose importer (TC 3.A.1.2.4) family. As to quaternary structure, the complex is composed of two ATP-binding proteins (XylG), two transmembrane proteins (XylH) and a solute-binding protein (XylF).

The protein resides in the cell inner membrane. It carries out the reaction D-xylose(out) + ATP + H2O = D-xylose(in) + ADP + phosphate + H(+). Part of the ABC transporter complex XylFGH involved in xylose import. Responsible for energy coupling to the transport system. The sequence is that of Xylose import ATP-binding protein XylG from Shigella flexneri serotype 5b (strain 8401).